The primary structure comprises 118 residues: Vesicle-associated membrane protein 1 (118 aa).

Positions methionine 1–alanine 15 are enriched in low complexity. The segment at methionine 1–glutamine 38 is disordered. The Cytoplasmic segment spans residues methionine 1 to lysine 96. Polar residues predominate over residues threonine 28 to glutamine 38. Residues arginine 33–lysine 93 enclose the v-SNARE coiled-coil homology domain. Serine 63 is modified (phosphoserine). A helical; Anchor for type IV membrane protein membrane pass occupies residues methionine 97–isoleucine 116. Residues phenylalanine 117–threonine 118 lie on the Vesicular side of the membrane.

The protein belongs to the synaptobrevin family. In terms of assembly, interacts with VAPA and VAPB. In terms of processing, (Microbial infection) Targeted and hydrolyzed by C.botulinum neurotoxin type D (BoNT/D, botD) which hydrolyzes the 61-Lys-|-Leu-62 bond and inhibits neurotransmitter release. This is a poor substrate for BoNT/D, high concentrations are required to cleave it in vitro. Post-translationally, (Microbial infection) Targeted and hydrolyzed by C.botulinum neurotoxin type F (BoNT/F, botF) which hydrolyzes the 60-Gln-|-Lys-61 bond and inhibits neurotransmitter release. As to expression, expressed in brain and spleen (at protein level). Isoform 1 expressed at very high level in brain. Even higher level found in spinal cord. Isoform 3 expressed in kidney, spleen and liver. Isoforms 2 and 3 expressed in osteoblasts of trabecular bone. Also expressed in heart.

It localises to the cytoplasmic vesicle. The protein localises to the secretory vesicle. Its subcellular location is the synaptic vesicle membrane. The protein resides in the synapse. It is found in the synaptosome. It localises to the cytoplasmic vesicle membrane. The protein localises to the mitochondrion outer membrane. Functionally, involved in the targeting and/or fusion of transport vesicles to their target membrane. The chain is Vesicle-associated membrane protein 1 (Vamp1) from Rattus norvegicus (Rat).